The following is a 236-amino-acid chain: uncharacterized protein (236 aa).

The segment at 217–236 (GESPDNVVRGEGGFGSTGGH) is disordered. Residues 226–236 (GEGGFGSTGGH) show a composition bias toward gly residues.

This is an uncharacterized protein from Ostreid herpesvirus 1 (isolate France) (OsHV-1).